Consider the following 406-residue polypeptide: Succinyl-diaminopimelate desuccinylase (406 aa).

His-95 is a Zn(2+) binding site. Asp-97 is an active-site residue. Asp-128 contributes to the Zn(2+) binding site. The active-site Proton acceptor is the Glu-162. 3 residues coordinate Zn(2+): Glu-163, Glu-191, and His-377.

Belongs to the peptidase M20A family. DapE subfamily. In terms of assembly, homodimer. Requires Zn(2+) as cofactor. Co(2+) is required as a cofactor.

The enzyme catalyses N-succinyl-(2S,6S)-2,6-diaminopimelate + H2O = (2S,6S)-2,6-diaminopimelate + succinate. Its pathway is amino-acid biosynthesis; L-lysine biosynthesis via DAP pathway; LL-2,6-diaminopimelate from (S)-tetrahydrodipicolinate (succinylase route): step 3/3. Functionally, catalyzes the hydrolysis of N-succinyl-L,L-diaminopimelic acid (SDAP), forming succinate and LL-2,6-diaminopimelate (DAP), an intermediate involved in the bacterial biosynthesis of lysine and meso-diaminopimelic acid, an essential component of bacterial cell walls. The polypeptide is Succinyl-diaminopimelate desuccinylase (Polaromonas naphthalenivorans (strain CJ2)).